The sequence spans 502 residues: D-alanine--D-alanyl carrier protein ligase (502 aa).

150–151 is a binding site for ATP; sequence TS. Aspartate 195 contacts D-alanine. 290 to 295 is an ATP binding site; it reads NTYGPT. Valine 299 lines the D-alanine pocket. Positions 381 and 490 each coordinate ATP. Residue lysine 490 participates in D-alanine binding.

Belongs to the ATP-dependent AMP-binding enzyme family. DltA subfamily.

The protein localises to the cytoplasm. It catalyses the reaction holo-[D-alanyl-carrier protein] + D-alanine + ATP = D-alanyl-[D-alanyl-carrier protein] + AMP + diphosphate. It functions in the pathway cell wall biogenesis; lipoteichoic acid biosynthesis. Catalyzes the first step in the D-alanylation of lipoteichoic acid (LTA), the activation of D-alanine and its transfer onto the D-alanyl carrier protein (Dcp) DltC. In an ATP-dependent two-step reaction, forms a high energy D-alanyl-AMP intermediate, followed by transfer of the D-alanyl residue as a thiol ester to the phosphopantheinyl prosthetic group of the Dcp. D-alanylation of LTA plays an important role in modulating the properties of the cell wall in Gram-positive bacteria, influencing the net charge of the cell wall. The sequence is that of D-alanine--D-alanyl carrier protein ligase from Bacillus licheniformis (strain ATCC 14580 / DSM 13 / JCM 2505 / CCUG 7422 / NBRC 12200 / NCIMB 9375 / NCTC 10341 / NRRL NRS-1264 / Gibson 46).